The primary structure comprises 474 residues: Gamma-aminobutyric acid receptor subunit beta-1 (474 aa).

The signal sequence occupies residues 1 to 25 (MWTVQNRESLGLLSFPVMVAMVCCA). The Extracellular portion of the chain corresponds to 26–245 (HSSNEPSNMS…SFRLKRNIGY (220 aa)). N-linked (GlcNAc...) asparagine glycans are attached at residues asparagine 33 and asparagine 105. Tyrosine 122 serves as a coordination point for histamine. Cysteines 161 and 175 form a disulfide. An N-linked (GlcNAc...) asparagine glycan is attached at asparagine 174. Residues 181–182 (SY) and threonine 227 each bind histamine. Positions 182 and 227 each coordinate 4-aminobutanoate. 3 helical membrane passes run 246–267 (FILQTYMPSTLITILSWVSFWI), 271–293 (ASAARVALGITTVLTMTTISTHL), and 305–327 (AIDIYLMGCFVFVFLALLEYAFV). The Cytoplasmic portion of the chain corresponds to 328-451 (NYIFFGKGPQ…DLTDVNSIDK (124 aa)). Residues 452–473 (WSRMFFPITFSLFNVVYWLYYV) traverse the membrane as a helical segment.

It belongs to the ligand-gated ion channel (TC 1.A.9) family. Gamma-aminobutyric acid receptor (TC 1.A.9.5) subfamily. GABRB1 sub-subfamily. In terms of assembly, heteropentamer, formed by a combination of alpha (GABRA1-6), beta (GABRB1-3), gamma (GABRG1-3), delta (GABRD), epsilon (GABRE), rho (GABRR1-3), pi (GABRP) and theta (GABRQ) chains, each subunit exhibiting distinct physiological and pharmacological properties. Binds UBQLN1.

Its subcellular location is the postsynaptic cell membrane. The protein resides in the cell membrane. It catalyses the reaction chloride(in) = chloride(out). With respect to regulation, potentiated by histamine. Its function is as follows. Beta subunit of the heteropentameric ligand-gated chloride channel gated by gamma-aminobutyric acid (GABA), a major inhibitory neurotransmitter in the brain. GABA-gated chloride channels, also named GABA(A) receptors (GABAAR), consist of five subunits arranged around a central pore and contain GABA active binding site(s) located at the alpha and beta subunit interface(s). When activated by GABA, GABAARs selectively allow the flow of chloride anions across the cell membrane down their electrochemical gradient. Chloride influx into the postsynaptic neuron following GABAAR opening decreases the neuron ability to generate a new action potential, thereby reducing nerve transmission. Beta-containing GABAARs can simultaneously bind GABA and histamine where histamine binds at the interface of two neighboring beta subunits, which may be involved in the regulation of sleep and wakefulness. The polypeptide is Gamma-aminobutyric acid receptor subunit beta-1 (Mus musculus (Mouse)).